Reading from the N-terminus, the 344-residue chain is Aspartate-semialdehyde dehydrogenase (344 aa).

NADP(+)-binding positions include 10-13 and 38-39; these read TGQV and RS. Arg101 is a binding site for phosphate. Residue Cys131 is the Acyl-thioester intermediate of the active site. Gln158 contributes to the substrate binding site. 161–162 is a binding site for NADP(+); the sequence is SG. Position 228 (Lys228) interacts with phosphate. Residue Arg250 coordinates substrate. His257 functions as the Proton acceptor in the catalytic mechanism. Position 326 (Asn326) interacts with NADP(+).

Belongs to the aspartate-semialdehyde dehydrogenase family. Homodimer.

It carries out the reaction L-aspartate 4-semialdehyde + phosphate + NADP(+) = 4-phospho-L-aspartate + NADPH + H(+). It participates in amino-acid biosynthesis; L-lysine biosynthesis via DAP pathway; (S)-tetrahydrodipicolinate from L-aspartate: step 2/4. Its pathway is amino-acid biosynthesis; L-methionine biosynthesis via de novo pathway; L-homoserine from L-aspartate: step 2/3. It functions in the pathway amino-acid biosynthesis; L-threonine biosynthesis; L-threonine from L-aspartate: step 2/5. Catalyzes the NADPH-dependent formation of L-aspartate-semialdehyde (L-ASA) by the reductive dephosphorylation of L-aspartyl-4-phosphate. In Corynebacterium glutamicum (strain ATCC 13032 / DSM 20300 / JCM 1318 / BCRC 11384 / CCUG 27702 / LMG 3730 / NBRC 12168 / NCIMB 10025 / NRRL B-2784 / 534), this protein is Aspartate-semialdehyde dehydrogenase.